A 251-amino-acid polypeptide reads, in one-letter code: Putative F-box protein L166 (251 aa).

The F-box domain maps to 1-46 (MDNICELFDEILPLIIEYLSDHDKVKFMTTCSRLYYFIDKVYYENI). The segment at 188-251 (PEPESQENFR…RPKSFMKYRR (64 aa)) is disordered. Positions 202–217 (TESNNNKPVNKSQPQI) are enriched in polar residues. Positions 241–251 (KRPKSFMKYRR) are enriched in basic residues.

This chain is Putative F-box protein L166, found in Acanthamoeba polyphaga (Amoeba).